Reading from the N-terminus, the 494-residue chain is UPF0164 protein TP_0859/TP_0860 (494 aa).

The signal sequence occupies residues 1-44 (MVRRPCVSAAPVRVGGRLVFGFARVGSRGLCLGALLLSPRIVLA).

It belongs to the UPF0164 family.

The protein is UPF0164 protein TP_0859/TP_0860 of Treponema pallidum (strain Nichols).